Reading from the N-terminus, the 490-residue chain is Glutamyl-tRNA(Gln) amidotransferase subunit A (490 aa).

Residues Lys-80 and Ser-155 each act as charge relay system in the active site. Ser-179 functions as the Acyl-ester intermediate in the catalytic mechanism.

This sequence belongs to the amidase family. GatA subfamily. As to quaternary structure, heterotrimer of A, B and C subunits.

It carries out the reaction L-glutamyl-tRNA(Gln) + L-glutamine + ATP + H2O = L-glutaminyl-tRNA(Gln) + L-glutamate + ADP + phosphate + H(+). Functionally, allows the formation of correctly charged Gln-tRNA(Gln) through the transamidation of misacylated Glu-tRNA(Gln) in organisms which lack glutaminyl-tRNA synthetase. The reaction takes place in the presence of glutamine and ATP through an activated gamma-phospho-Glu-tRNA(Gln). In Brevibacillus brevis (strain 47 / JCM 6285 / NBRC 100599), this protein is Glutamyl-tRNA(Gln) amidotransferase subunit A.